A 61-amino-acid chain; its full sequence is Prophage outer membrane lipoprotein RzoR (61 aa).

The first 19 residues, 1-19, serve as a signal peptide directing secretion; sequence MRKLKMMLCVMMLPLVVVG. The N-palmitoyl cysteine moiety is linked to residue Cys-20. Cys-20 carries the S-diacylglycerol cysteine lipid modification.

This sequence belongs to the lambdalikevirus o-spanin family. As to quaternary structure, homodimer; disulfide-linked. Interacts (via C-terminus) with RZ (via C-terminus). Part of the spanin complex which spans the entire periplasmic space. The spanin complex is composed of spanin, inner membrane subunit and spanin, outer membrane subunit.

The protein resides in the cell outer membrane. Functionally, component of the spanin complex that disrupts the outer membrane and causes cell lysis during virus exit. The spanin complex conducts the final step in cell lysis by disrupting the outer membrane after holin and endolysin action have permeabilized the inner membrane and degraded the host peptidoglycans. The polypeptide is Prophage outer membrane lipoprotein RzoR (rzoR) (Escherichia coli (strain K12)).